We begin with the raw amino-acid sequence, 61 residues long: Type IV secretion system protein PtlI homolog (61 aa).

An N-terminal signal peptide occupies residues 1 to 25 (MIHAHSNARLLRWAILAIAPVTLGA). Residues 37-61 (PDGKPLIPINTAAPEQGSSCQTRAP) are disordered. The segment covering 52-61 (QGSSCQTRAP) has biased composition (polar residues).

This Bordetella parapertussis (strain 12822 / ATCC BAA-587 / NCTC 13253) protein is Type IV secretion system protein PtlI homolog (ptlI).